The chain runs to 400 residues: Casein kinase I homolog hhp2 (400 aa).

A Protein kinase domain is found at 12 to 278 (YRIGRKIGSG…YLRKLFRDLL (267 aa)). Residues 18-26 (IGSGSFGQI) and K41 each bind ATP. D131 serves as the catalytic Proton acceptor. A disordered region spans residues 330–352 (PNYSSIPLPAERNPKTPQSFSTN).

Belongs to the protein kinase superfamily. CK1 Ser/Thr protein kinase family. Casein kinase I subfamily.

The protein resides in the nucleus. The catalysed reaction is L-seryl-[protein] + ATP = O-phospho-L-seryl-[protein] + ADP + H(+). It catalyses the reaction L-threonyl-[protein] + ATP = O-phospho-L-threonyl-[protein] + ADP + H(+). Functionally, involved in DNA repair. May regulate the activity of protein(s) involved in double strand break repair caused by gamma rays. This is Casein kinase I homolog hhp2 (hhp2) from Schizosaccharomyces pombe (strain 972 / ATCC 24843) (Fission yeast).